The primary structure comprises 232 residues: Large ribosomal subunit protein uL1 (232 aa).

This sequence belongs to the universal ribosomal protein uL1 family. As to quaternary structure, part of the 50S ribosomal subunit.

Its function is as follows. Binds directly to 23S rRNA. The L1 stalk is quite mobile in the ribosome, and is involved in E site tRNA release. Protein L1 is also a translational repressor protein, it controls the translation of the L11 operon by binding to its mRNA. The chain is Large ribosomal subunit protein uL1 from Aliarcobacter butzleri (strain RM4018) (Arcobacter butzleri).